A 510-amino-acid polypeptide reads, in one-letter code: MVPWVEKYRPRSLKELVNQDEAKKELAAWANEWARGSIPEPRAVLLHGPPGTGKTSAAYALAHDFGWDVIELNASDKRTRNVIEKIVGGASTSRSLLRMTREAGGDYEHVEGHSDRVLVLVDEVDGIDPREDRGGVTALTRAVRQARNPMVLVANDPWVLPKSLRDAVRMIEFRRLRVNDIVEALRRICEREGIEYEEVALRRIAKRARGDLRAAINDLEALARPTGRVTSDDVEALGWRDKEITIFEALGRIFNKPPRQARRALWNLDEDPDDVILWIAQNIPRAYRDPEEIARAYDYLSKADVFSSRAIETGDWRFKYVYATDLMTSGVAAARKGKPPGFVRFQPPKILRKLGTTRKEREVRNSIAKKIAERMHVSTRRAKMDVISVLEIAFRKVADNPTDRGLEILGGIAGYLELSKREIGFLCGDPQVAQRVYQRALRVREKLRKIRRERVKGAMESMLERKREESEVEEEAKEIEEAVEKAEEEEEREEKKKEGGGEQRTLDAFF.

Position 48 to 55 (48 to 55 (GPPGTGKT)) interacts with ATP. The disordered stretch occupies residues 459–510 (MESMLERKREESEVEEEAKEIEEAVEKAEEEEEREEKKKEGGGEQRTLDAFF). Positions 493–510 (EEKKKEGGGEQRTLDAFF) are enriched in basic and acidic residues.

It belongs to the activator 1 small subunits family. RfcL subfamily. As to quaternary structure, heteromultimer composed of small subunits (RfcS) and large subunits (RfcL).

Its function is as follows. Part of the RFC clamp loader complex which loads the PCNA sliding clamp onto DNA. The protein is Replication factor C large subunit of Methanopyrus kandleri (strain AV19 / DSM 6324 / JCM 9639 / NBRC 100938).